A 397-amino-acid polypeptide reads, in one-letter code: CCA-adding enzyme (397 aa).

Gly-26 and Arg-29 together coordinate ATP. The CTP site is built by Gly-26 and Arg-29. Mg(2+) is bound by residues Asp-39 and Asp-41. Residues Arg-110, Asp-153, Arg-156, Arg-159, and Arg-162 each coordinate ATP. Positions 110, 153, 156, 159, and 162 each coordinate CTP.

This sequence belongs to the tRNA nucleotidyltransferase/poly(A) polymerase family. Bacterial CCA-adding enzyme type 3 subfamily. Homodimer. Mg(2+) serves as cofactor.

It catalyses the reaction a tRNA precursor + 2 CTP + ATP = a tRNA with a 3' CCA end + 3 diphosphate. The enzyme catalyses a tRNA with a 3' CCA end + 2 CTP + ATP = a tRNA with a 3' CCACCA end + 3 diphosphate. Functionally, catalyzes the addition and repair of the essential 3'-terminal CCA sequence in tRNAs without using a nucleic acid template. Adds these three nucleotides in the order of C, C, and A to the tRNA nucleotide-73, using CTP and ATP as substrates and producing inorganic pyrophosphate. tRNA 3'-terminal CCA addition is required both for tRNA processing and repair. Also involved in tRNA surveillance by mediating tandem CCA addition to generate a CCACCA at the 3' terminus of unstable tRNAs. While stable tRNAs receive only 3'-terminal CCA, unstable tRNAs are marked with CCACCA and rapidly degraded. The sequence is that of CCA-adding enzyme from Bacillus cereus (strain AH187).